The following is a 339-amino-acid chain: Nicotinate-nucleotide--dimethylbenzimidazole phosphoribosyltransferase (339 aa).

The Proton acceptor role is filled by Glu306.

The protein belongs to the CobT family.

It catalyses the reaction 5,6-dimethylbenzimidazole + nicotinate beta-D-ribonucleotide = alpha-ribazole 5'-phosphate + nicotinate + H(+). Its pathway is nucleoside biosynthesis; alpha-ribazole biosynthesis; alpha-ribazole from 5,6-dimethylbenzimidazole: step 1/2. Functionally, catalyzes the synthesis of alpha-ribazole-5'-phosphate from nicotinate mononucleotide (NAMN) and 5,6-dimethylbenzimidazole (DMB). The polypeptide is Nicotinate-nucleotide--dimethylbenzimidazole phosphoribosyltransferase (Brucella anthropi (strain ATCC 49188 / DSM 6882 / CCUG 24695 / JCM 21032 / LMG 3331 / NBRC 15819 / NCTC 12168 / Alc 37) (Ochrobactrum anthropi)).